The sequence spans 981 residues: Transcription factor TAC1 (981 aa).

Residues methionine 1–asparagine 29 are compositionally biased toward polar residues. A disordered region spans residues methionine 1–arginine 33. Positions cysteine 40 to cysteine 68 form a DNA-binding region, zn(2)-C6 fungal-type. 3 disordered regions span residues proline 74 to glycine 106, histidine 165 to serine 199, and leucine 868 to threonine 902. Low complexity predominate over residues histidine 165–serine 177. Residues leucine 868 to methionine 880 are compositionally biased toward polar residues. A compositionally biased stretch (low complexity) spans asparagine 881–threonine 902.

In terms of processing, phosphorylated. Phosphorylation leads to hyperactivation.

It is found in the nucleus. Its activity is regulated as follows. Drugs such as farnesol and 1-dodecanol are able to hyperactivate TAC1 probably via phosphorylation by the Mediator complex. In terms of biological role, transcriptional activator of drug-responsive genes including the ABC-type transporters CDR1 and CDR2, as well as HSP12 and RTA3. Binds the cis-acting regulatory drug-responsive elements (DREs) with the consensus sequence 5'-CGGAWATCGGATATTTTTTT-3' in the promoters of target genes. The chain is Transcription factor TAC1 from Candida albicans (strain SC5314 / ATCC MYA-2876) (Yeast).